A 288-amino-acid polypeptide reads, in one-letter code: Nucleotide-binding protein Tola_2941 (288 aa).

Residue 8 to 15 (GRSGSGKT) coordinates ATP. Position 56–59 (56–59 (DVRN)) interacts with GTP.

This sequence belongs to the RapZ-like family.

In terms of biological role, displays ATPase and GTPase activities. The polypeptide is Nucleotide-binding protein Tola_2941 (Tolumonas auensis (strain DSM 9187 / NBRC 110442 / TA 4)).